A 314-amino-acid chain; its full sequence is Deoxyhypusine hydroxylase (314 aa).

Met1 carries the post-translational modification N-acetylmethionine. HEAT-like PBS-type repeat units lie at residues 61 to 87 (LAHE…VLND), 94 to 120 (VRHE…SLSS), 188 to 214 (ERYA…SLSA), 219 to 245 (LRHE…VLRD), and 252 to 278 (VRHE…FSKD). Fe cation contacts are provided by His63, Glu64, His96, and Glu97. Fe cation-binding residues include His221, Glu222, His254, and Glu255.

It belongs to the deoxyhypusine hydroxylase family. Fe(2+) serves as cofactor.

It catalyses the reaction [eIF5A protein]-deoxyhypusine + AH2 + O2 = [eIF5A protein]-hypusine + A + H2O. The protein operates within protein modification; eIF5A hypusination. Functionally, catalyzes the hydroxylation of the N(6)-(4-aminobutyl)-L-lysine intermediate to form hypusine, an essential post-translational modification only found in mature eIF-5A factor. This is Deoxyhypusine hydroxylase from Arabidopsis thaliana (Mouse-ear cress).